Consider the following 843-residue polypeptide: Elongation factor 2 (843 aa).

The tr-type G domain maps to 17–344 (HNIRNMSVIA…MMIFHLPSPH (328 aa)). Residues 26 to 33 (AHVDHGKS) and 158 to 161 (NKMD) contribute to the GTP site. Histidine 700 bears the Diphthamide mark. A Phosphoserine modification is found at serine 837.

This sequence belongs to the TRAFAC class translation factor GTPase superfamily. Classic translation factor GTPase family. In terms of assembly, may interact with glutaredoxins (Grxs). In terms of tissue distribution, expressed in root, stem, leaves, flowers and siliques.

It is found in the cytoplasm. It carries out the reaction GTP + H2O = GDP + phosphate + H(+). It participates in protein biosynthesis; polypeptide chain elongation. Functionally, catalyzes the GTP-dependent ribosomal translocation step during translation elongation. During this step, the ribosome changes from the pre-translocational (PRE) to the post-translocational (POST) state as the newly formed A-site-bound peptidyl-tRNA and P-site-bound deacylated tRNA move to the P and E sites, respectively. Catalyzes the coordinated movement of the two tRNA molecules, the mRNA and conformational changes in the ribosome. Involved in cold responses leading to freezing tolerance via the induction of cold-responsive genes. In Arabidopsis thaliana (Mouse-ear cress), this protein is Elongation factor 2.